The sequence spans 278 residues: Pca operon regulatory protein (278 aa).

The 61-residue stretch at 31 to 91 (VAGISKGMAI…SDGHYFYLTP (61 aa)) folds into the HTH iclR-type domain. A DNA-binding region (H-T-H motif) is located at residues 53–72 (ITMAAEKTGMTRAAARRHLL). Residues 106–278 (LPKISQPLLN…ETARELRNIL (173 aa)) enclose the IclR-ED domain.

Its function is as follows. Activates transcription of the pca operon. This is Pca operon regulatory protein (pcaU) from Acinetobacter baylyi (strain ATCC 33305 / BD413 / ADP1).